The primary structure comprises 59 residues: uncharacterized protein (59 aa).

The N-terminal stretch at 1 to 21 (MYLFYVLLSSLFLSALIYVIG) is a signal peptide. Residues 22-24 (KSH) lie on the Extracellular side of the membrane. A helical membrane pass occupies residues 25 to 45 (PNLFMFISLFVNVVTILYLVF). The Cytoplasmic portion of the chain corresponds to 46 to 59 (KDYGQYIIAKPINT).

It is found in the host membrane. This is an uncharacterized protein from Acidianus convivator (ABV).